Here is a 140-residue protein sequence, read N- to C-terminus: Large ribosomal subunit protein bL17 (140 aa).

This sequence belongs to the bacterial ribosomal protein bL17 family. As to quaternary structure, part of the 50S ribosomal subunit. Contacts protein L32.

This chain is Large ribosomal subunit protein bL17, found in Roseobacter denitrificans (strain ATCC 33942 / OCh 114) (Erythrobacter sp. (strain OCh 114)).